A 249-amino-acid polypeptide reads, in one-letter code: Isoprenyl transferase (249 aa).

Aspartate 25 is an active-site residue. Aspartate 25 contacts Mg(2+). Substrate is bound by residues 26-29 (GNGR), tryptophan 30, arginine 38, histidine 42, and 70-72 (STE). Asparagine 73 functions as the Proton acceptor in the catalytic mechanism. Substrate contacts are provided by residues tryptophan 74, arginine 76, arginine 197, and 203–205 (RLS). Residue glutamate 216 participates in Mg(2+) binding.

The protein belongs to the UPP synthase family. Homodimer. Mg(2+) is required as a cofactor.

In terms of biological role, catalyzes the condensation of isopentenyl diphosphate (IPP) with allylic pyrophosphates generating different type of terpenoids. This Streptococcus pyogenes serotype M1 protein is Isoprenyl transferase.